The primary structure comprises 20 residues: AGKLEGKVXLVTGAPSGIGK.

In Naegleria fowleri (Brain eating amoeba), this protein is Unknown protein NF042 from 2D-PAGE.